A 111-amino-acid polypeptide reads, in one-letter code: Cell cycle protein GpsB (111 aa).

Residues 34-72 adopt a coiled-coil conformation; it reads LDMIIKDYEVFHKELEQLQQQNARLKRELEEQKLAAAQA.

This sequence belongs to the GpsB family. As to quaternary structure, forms polymers through the coiled coil domains. Interacts with PBP1, MreC and EzrA.

It is found in the cytoplasm. Its function is as follows. Divisome component that associates with the complex late in its assembly, after the Z-ring is formed, and is dependent on DivIC and PBP2B for its recruitment to the divisome. Together with EzrA, is a key component of the system that regulates PBP1 localization during cell cycle progression. Its main role could be the removal of PBP1 from the cell pole after pole maturation is completed. Also contributes to the recruitment of PBP1 to the division complex. Not essential for septum formation. This is Cell cycle protein GpsB from Bacillus cytotoxicus (strain DSM 22905 / CIP 110041 / 391-98 / NVH 391-98).